A 538-amino-acid polypeptide reads, in one-letter code: Pentatricopeptide repeat-containing protein At1g33350 (538 aa).

PPR repeat units lie at residues 87 to 123 (NTHLYAAVLTAYSSSLPLHASSAFSFFRLMVNRSVPR), 125 to 159 (NHFIYPLVLKSTPYLSSAFSTPLVHTHLFKSGFHL), 160 to 191 (YVVVQTALLHSYASSVSHITLARQLFDEMSER), 192 to 226 (NVVSWTAMLSGYARSGDISNAVALFEDMPERDVPS), 227 to 253 (WNAILAACTQNGLFLEAVSLFRRMINE), 259 to 293 (NEVTVVCVLSACAQTGTLQLAKGIHAFAYRRDLSS), 294 to 324 (DVFVSNSLVDLYGKCGNLEEASSVFKMASKK), 325 to 359 (SLTAWNSMINCFALHGRSEEAIAVFEEMMKLNIND), 363 to 398 (DHITFIGLLNACTHGGLVSKGRGYFDLMTNRFGIEP), and 399 to 433 (RIEHYGCLIDLLGRAGRFDEALEVMSTMKMKADEA). The interval 434–509 (IWGSLLNACK…PPGWSRIEID (76 aa)) is type E motif.

Belongs to the PPR family. PCMP-E subfamily.

The protein is Pentatricopeptide repeat-containing protein At1g33350 (PCMP-E57) of Arabidopsis thaliana (Mouse-ear cress).